Consider the following 118-residue polypeptide: UPF0342 protein Hore_03100 (118 aa).

This sequence belongs to the UPF0342 family.

This Halothermothrix orenii (strain H 168 / OCM 544 / DSM 9562) protein is UPF0342 protein Hore_03100.